The sequence spans 612 residues: UvrABC system protein C (612 aa).

The GIY-YIG domain occupies 20 to 98; it reads THSGVYRMLD…IKQHRPKYNI (79 aa). Residues 208–243 form the UVR domain; the sequence is SSVLEEISAKMYQASEDMEYEKAQVYRDQLVVLRKL.

The protein belongs to the UvrC family. Interacts with UvrB in an incision complex.

It is found in the cytoplasm. Functionally, the UvrABC repair system catalyzes the recognition and processing of DNA lesions. UvrC both incises the 5' and 3' sides of the lesion. The N-terminal half is responsible for the 3' incision and the C-terminal half is responsible for the 5' incision. In Francisella tularensis subsp. tularensis (strain FSC 198), this protein is UvrABC system protein C.